The chain runs to 210 residues: Na(+)-translocating NADH-quinone reductase subunit D (210 aa).

5 helical membrane passes run 42-62 (FVMTLAVTFVTALSNFFVSLI), 72-92 (IIVQMAIIASLVIVVDQILKA), 103-123 (VFVGLIITNCIVMGRAEAFAM), 131-151 (LIDGIGNGLGYGFVLITVGFF), and 178-198 (NGLMLLAPSAFFLIGFMIWAI).

Belongs to the NqrDE/RnfAE family. In terms of assembly, composed of six subunits; NqrA, NqrB, NqrC, NqrD, NqrE and NqrF.

It is found in the cell inner membrane. The enzyme catalyses a ubiquinone + n Na(+)(in) + NADH + H(+) = a ubiquinol + n Na(+)(out) + NAD(+). Its function is as follows. NQR complex catalyzes the reduction of ubiquinone-1 to ubiquinol by two successive reactions, coupled with the transport of Na(+) ions from the cytoplasm to the periplasm. NqrA to NqrE are probably involved in the second step, the conversion of ubisemiquinone to ubiquinol. This chain is Na(+)-translocating NADH-quinone reductase subunit D, found in Vibrio vulnificus (strain CMCP6).